A 190-amino-acid polypeptide reads, in one-letter code: Hypoxanthine/guanine phosphoribosyltransferase (190 aa).

This sequence belongs to the purine/pyrimidine phosphoribosyltransferase family. Archaeal HPRT subfamily. As to quaternary structure, homodimer.

Its subcellular location is the cytoplasm. It carries out the reaction IMP + diphosphate = hypoxanthine + 5-phospho-alpha-D-ribose 1-diphosphate. The enzyme catalyses GMP + diphosphate = guanine + 5-phospho-alpha-D-ribose 1-diphosphate. It participates in purine metabolism; IMP biosynthesis via salvage pathway; IMP from hypoxanthine: step 1/1. Its function is as follows. Catalyzes a salvage reaction resulting in the formation of IMP that is energically less costly than de novo synthesis. In Methanobacterium paludis (strain DSM 25820 / JCM 18151 / SWAN1), this protein is Hypoxanthine/guanine phosphoribosyltransferase.